Consider the following 519-residue polypeptide: Voltage-gated potassium channel regulatory subunit KCNG4 (519 aa).

Residues methionine 1–glutamine 25 are disordered. The Cytoplasmic portion of the chain corresponds to methionine 1 to leucine 218. Residues proline 219–valine 240 traverse the membrane as a helical segment. The Extracellular portion of the chain corresponds to serine 241–tyrosine 261. A helical transmembrane segment spans residues isoleucine 262–glutamine 283. Topologically, residues alanine 284 to proline 294 are cytoplasmic. A helical membrane pass occupies residues leucine 295–glutamate 314. Residues glutamate 315 to tyrosine 328 are Extracellular-facing. A helical; Voltage-sensor membrane pass occupies residues leucine 329–histidine 353. The Cytoplasmic segment spans residues serine 354–threonine 368. The chain crosses the membrane as a helical span at residues arginine 369–tyrosine 390. The Extracellular portion of the chain corresponds to valine 391–isoleucine 405. Residues proline 406–threonine 417 constitute an intramembrane region (helical). The short motif at threonine 418–aspartate 423 is the Selectivity filter element. An intramembrane segment occupies threonine 418–valine 425. Over proline 426–glutamine 432 the chain is Extracellular. Residues methionine 433–tyrosine 461 form a helical membrane-spanning segment. The Cytoplasmic segment spans residues leucine 462–methionine 519.

This sequence belongs to the potassium channel family. G (TC 1.A.1.2) subfamily. Kv6.4/KCNG4 sub-subfamily. Heterotetramer with KCNB1. Does not form homomultimer. Highly expressed in brain, and at lower levels in liver, small intestine and colon.

Its subcellular location is the cell membrane. In terms of biological role, regulatory subunit of the voltage-gated potassium (Kv) channel which, when coassembled with KCNB1, modulates the kinetics parameters of the heterotetrameric channel namely the time course of activation, deactivation and inactivation and on the voltage-dependence of activation. Potassium channel subunit that does not form functional channels by itself. Reduces the deactivation rate. Modulates the threshold for activation by shifting by approximately 20 mV in hyperpolarizing direction. Markedly changes the inactivation by shifting the voltage dependence of inactivation by approximately 40 mV in hyperpolarizing direction. Acceleratee activation and enhances the time course of activation. The chain is Voltage-gated potassium channel regulatory subunit KCNG4 from Homo sapiens (Human).